A 547-amino-acid chain; its full sequence is Chaperonin GroEL (547 aa).

Residues 30-33, Lys51, 87-91, Gly415, and Asp496 contribute to the ATP site; these read TLGP and DGTTT.

Belongs to the chaperonin (HSP60) family. As to quaternary structure, forms a cylinder of 14 subunits composed of two heptameric rings stacked back-to-back. Interacts with the co-chaperonin GroES.

It localises to the cytoplasm. It carries out the reaction ATP + H2O + a folded polypeptide = ADP + phosphate + an unfolded polypeptide.. Its function is as follows. Together with its co-chaperonin GroES, plays an essential role in assisting protein folding. The GroEL-GroES system forms a nano-cage that allows encapsulation of the non-native substrate proteins and provides a physical environment optimized to promote and accelerate protein folding. This chain is Chaperonin GroEL, found in Chlorobium phaeobacteroides (strain DSM 266 / SMG 266 / 2430).